We begin with the raw amino-acid sequence, 196 residues long: 7-methyl-GTP pyrophosphatase (196 aa).

The active-site Proton acceptor is D72.

It belongs to the Maf family. YceF subfamily. It depends on a divalent metal cation as a cofactor.

The protein localises to the cytoplasm. It carries out the reaction N(7)-methyl-GTP + H2O = N(7)-methyl-GMP + diphosphate + H(+). Its function is as follows. Nucleoside triphosphate pyrophosphatase that hydrolyzes 7-methyl-GTP (m(7)GTP). May have a dual role in cell division arrest and in preventing the incorporation of modified nucleotides into cellular nucleic acids. In Neisseria gonorrhoeae (strain ATCC 700825 / FA 1090), this protein is 7-methyl-GTP pyrophosphatase.